The following is a 67-amino-acid chain: DNA gyrase inhibitor YacG (67 aa).

Residues cysteine 8, cysteine 11, cysteine 27, and cysteine 31 each coordinate Zn(2+).

The protein belongs to the DNA gyrase inhibitor YacG family. As to quaternary structure, interacts with GyrB. Requires Zn(2+) as cofactor.

In terms of biological role, inhibits all the catalytic activities of DNA gyrase by preventing its interaction with DNA. Acts by binding directly to the C-terminal domain of GyrB, which probably disrupts DNA binding by the gyrase. This Ralstonia pickettii (strain 12J) protein is DNA gyrase inhibitor YacG.